A 324-amino-acid polypeptide reads, in one-letter code: Probable carboxylesterase 9 (324 aa).

An Involved in the stabilization of the negatively charged intermediate by the formation of the oxyanion hole motif is present at residues 86-88; that stretch reads HGS. Residues serine 171, aspartate 272, and histidine 302 contribute to the active site.

It belongs to the 'GDXG' lipolytic enzyme family. As to expression, expressed in flowers.

The enzyme catalyses a carboxylic ester + H2O = an alcohol + a carboxylate + H(+). Functionally, carboxylesterase acting on esters with varying acyl chain length. The protein is Probable carboxylesterase 9 (CXE9) of Arabidopsis thaliana (Mouse-ear cress).